Reading from the N-terminus, the 120-residue chain is NAD(P)H-quinone oxidoreductase subunit 3 (120 aa).

A run of 3 helical transmembrane segments spans residues 10 to 30 (LLVF…ASAL), 64 to 84 (MFAL…PWAV), and 89 to 109 (LGLL…VGLV).

It belongs to the complex I subunit 3 family. As to quaternary structure, NDH-1 can be composed of about 15 different subunits; different subcomplexes with different compositions have been identified which probably have different functions.

The protein localises to the cellular thylakoid membrane. The enzyme catalyses a plastoquinone + NADH + (n+1) H(+)(in) = a plastoquinol + NAD(+) + n H(+)(out). It catalyses the reaction a plastoquinone + NADPH + (n+1) H(+)(in) = a plastoquinol + NADP(+) + n H(+)(out). Its function is as follows. NDH-1 shuttles electrons from an unknown electron donor, via FMN and iron-sulfur (Fe-S) centers, to quinones in the respiratory and/or the photosynthetic chain. The immediate electron acceptor for the enzyme in this species is believed to be plastoquinone. Couples the redox reaction to proton translocation, and thus conserves the redox energy in a proton gradient. Cyanobacterial NDH-1 also plays a role in inorganic carbon-concentration. This is NAD(P)H-quinone oxidoreductase subunit 3 from Synechococcus sp. (strain JA-3-3Ab) (Cyanobacteria bacterium Yellowstone A-Prime).